A 139-amino-acid polypeptide reads, in one-letter code: Drosulfakinins (139 aa).

An N-terminal signal peptide occupies residues M1–T35. Positions A36 to S71 are excised as a propeptide. F80 is modified (phenylalanine amide). A propeptide spanning residues G81 to S109 is cleaved from the precursor. Y115 carries the sulfotyrosine modification. F120 carries the phenylalanine amide modification. Position 132 is a sulfotyrosine (Y132). At F137 the chain carries Phenylalanine amide.

It belongs to the gastrin/cholecystokinin family.

The protein resides in the secreted. In terms of biological role, drosulfakinin-0 (DSK 0) plays diverse biological roles including regulating gut muscle contraction in adults but not in larvae. This chain is Drosulfakinins, found in Drosophila pseudoobscura pseudoobscura (Fruit fly).